The chain runs to 170 residues: Lipoprotein signal peptidase (170 aa).

3 helical membrane passes run F9–V29, I72–E92, and C95–F117. Active-site residues include D124 and D146. The chain crosses the membrane as a helical span at residues N143–I163.

The protein belongs to the peptidase A8 family.

The protein localises to the cell inner membrane. It carries out the reaction Release of signal peptides from bacterial membrane prolipoproteins. Hydrolyzes -Xaa-Yaa-Zaa-|-(S,diacylglyceryl)Cys-, in which Xaa is hydrophobic (preferably Leu), and Yaa (Ala or Ser) and Zaa (Gly or Ala) have small, neutral side chains.. Its pathway is protein modification; lipoprotein biosynthesis (signal peptide cleavage). Functionally, this protein specifically catalyzes the removal of signal peptides from prolipoproteins. This Borrelia garinii subsp. bavariensis (strain ATCC BAA-2496 / DSM 23469 / PBi) (Borreliella bavariensis) protein is Lipoprotein signal peptidase.